Reading from the N-terminus, the 190-residue chain is Large ribosomal subunit protein uL6A (190 aa).

It belongs to the universal ribosomal protein uL6 family. Component of the large ribosomal subunit (LSU). Mature yeast ribosomes consist of a small (40S) and a large (60S) subunit. The 40S small subunit contains 1 molecule of ribosomal RNA (18S rRNA) and at least 33 different proteins. The large 60S subunit contains 3 rRNA molecules (25S, 5.8S and 5S rRNA) and at least 46 different proteins. uL6 lines the binding pocket for eukaryotic elongation factor 2 (eEF2).

Its subcellular location is the cytoplasm. It is found in the nucleus. Functionally, component of the ribosome, a large ribonucleoprotein complex responsible for the synthesis of proteins in the cell. The small ribosomal subunit (SSU) binds messenger RNAs (mRNAs) and translates the encoded message by selecting cognate aminoacyl-transfer RNA (tRNA) molecules. The large subunit (LSU) contains the ribosomal catalytic site termed the peptidyl transferase center (PTC), which catalyzes the formation of peptide bonds, thereby polymerizing the amino acids delivered by tRNAs into a polypeptide chain. The nascent polypeptides leave the ribosome through a tunnel in the LSU and interact with protein factors that function in enzymatic processing, targeting, and the membrane insertion of nascent chains at the exit of the ribosomal tunnel. The protein is Large ribosomal subunit protein uL6A (rpl901) of Schizosaccharomyces pombe (strain 972 / ATCC 24843) (Fission yeast).